Consider the following 200-residue polypeptide: Large ribosomal subunit protein bL25 (200 aa).

The protein belongs to the bacterial ribosomal protein bL25 family. CTC subfamily. As to quaternary structure, part of the 50S ribosomal subunit; part of the 5S rRNA/L5/L18/L25 subcomplex. Contacts the 5S rRNA. Binds to the 5S rRNA independently of L5 and L18.

Functionally, this is one of the proteins that binds to the 5S RNA in the ribosome where it forms part of the central protuberance. The chain is Large ribosomal subunit protein bL25 from Nocardia farcinica (strain IFM 10152).